A 124-amino-acid chain; its full sequence is Fluoride-specific ion channel FluC (124 aa).

Transmembrane regions (helical) follow at residues 4 to 24 (VLYI…LSGW), 32 to 52 (AFPY…GLIM), 67 to 87 (IGLT…SYET), and 101 to 121 (ANVL…IIVA). Positions 75 and 78 each coordinate Na(+).

This sequence belongs to the fluoride channel Fluc/FEX (TC 1.A.43) family.

The protein localises to the cell inner membrane. The enzyme catalyses fluoride(in) = fluoride(out). With respect to regulation, na(+) is not transported, but it plays an essential structural role and its presence is essential for fluoride channel function. Fluoride-specific ion channel. Important for reducing fluoride concentration in the cell, thus reducing its toxicity. In Geotalea uraniireducens (strain Rf4) (Geobacter uraniireducens), this protein is Fluoride-specific ion channel FluC.